The chain runs to 494 residues: MKNIAFDSNKYLSLQRNHILERIKQFDGKLYMEFGGKMLEDFHAARVLPGYEPDNKIKLLKELKDQVEIVITINANNIEHSKTRGDLGISYDQEVLRLIDTFNALDIYVGSVVITQYNHQAAADHFQKQLAKNGITSYRHYPIKGYPTDINHIISPEGMGRNDYIKTSRNLIVVTAPGPGSGKLATCISQLYHDQLNGITSGYAKFETFPVWNLPLHHPVNLAYEAATADLDDVNMIDPFHLEAYGKTAVNYNRDIEVFPVLNRTFERILSQSPYASPTDMGVNMVGFSIVNEEAAIEASKQEIIRRYYQTLVDFKAERVTETAVKKLELLMNDIGVTPKDRQVTLIARQKAELTGQPALALQLPNGQVVTGKTSDLFGPTAAVIINAIKTLAHISKETHLIEPEYVKPIQGLKINHLGSHNPRLHANEILMALAITAMNNNQADLAMKELGNLKGSEAHSTVILTNEDKHALRQLGINVTFDPVYQHHKLYRS.

The protein belongs to the UPF0371 family.

This is UPF0371 protein Sez_1293 from Streptococcus equi subsp. zooepidemicus (strain MGCS10565).